Reading from the N-terminus, the 190-residue chain is Succinate dehydrogenase assembly factor 2, mitochondrial (190 aa).

This sequence belongs to the SDHAF2 family. Interacts with the flavoprotein subunit within the SDH catalytic dimer.

It is found in the mitochondrion matrix. Plays an essential role in the assembly of succinate dehydrogenase (SDH), an enzyme complex (also referred to as respiratory complex II) that is a component of both the tricarboxylic acid (TCA) cycle and the mitochondrial electron transport chain, and which couples the oxidation of succinate to fumarate with the reduction of ubiquinone (coenzyme Q) to ubiquinol. Required for flavinylation (covalent attachment of FAD) of the flavoprotein subunit of the SDH catalytic dimer. In Komagataella phaffii (strain GS115 / ATCC 20864) (Yeast), this protein is Succinate dehydrogenase assembly factor 2, mitochondrial.